A 143-amino-acid polypeptide reads, in one-letter code: Envelope protein A28 homolog (143 aa).

Residues 1 to 21 (MNTVQILVVILITTALSFLVF) traverse the membrane as a helical; Signal-anchor for type II membrane protein segment. Residues 22 to 143 (QLWYYAENYE…LLRLLMANTS (122 aa)) are Virion surface-facing.

Belongs to the poxviridae A28 protein family. In terms of processing, contains two intramolecular disulfide bonds. They are created by the viral disulfide bond formation pathway, a poxvirus-specific pathway that operates on the cytoplasmic side of the MV membranes.

The protein localises to the virion membrane. Its function is as follows. Envelope protein required for virus entry into host cell and for cell-cell fusion (syncytium formation). This Amsacta (AmEPV) protein is Envelope protein A28 homolog.